The primary structure comprises 365 residues: Aminomethyltransferase (365 aa).

This sequence belongs to the GcvT family. The glycine cleavage system is composed of four proteins: P, T, L and H.

It carries out the reaction N(6)-[(R)-S(8)-aminomethyldihydrolipoyl]-L-lysyl-[protein] + (6S)-5,6,7,8-tetrahydrofolate = N(6)-[(R)-dihydrolipoyl]-L-lysyl-[protein] + (6R)-5,10-methylene-5,6,7,8-tetrahydrofolate + NH4(+). Its function is as follows. The glycine cleavage system catalyzes the degradation of glycine. This chain is Aminomethyltransferase, found in Geobacillus thermodenitrificans (strain NG80-2).